The chain runs to 189 residues: FAS1 domain-containing protein mug57 (189 aa).

A signal peptide spans 1 to 24 (MMKLFCLNIFRFLYTTSFISAVLS). One can recognise an FAS1 domain in the interval 37–182 (EPRLFELLAE…GEMWVLNATL (146 aa)).

The protein resides in the cytoplasm. The protein localises to the nucleus. Its subcellular location is the membrane. Its function is as follows. Has a role in sporulation. The chain is FAS1 domain-containing protein mug57 (mug57) from Schizosaccharomyces pombe (strain 972 / ATCC 24843) (Fission yeast).